A 307-amino-acid polypeptide reads, in one-letter code: Glycerol-3-phosphate dehydrogenase [NAD(P)+] (307 aa).

NADPH is bound by residues W14, R34, R35, and K82. K82 and G110 together coordinate sn-glycerol 3-phosphate. S114 serves as a coordination point for NADPH. Sn-glycerol 3-phosphate-binding residues include K165, D218, S228, R229, and N230. Residue K165 is the Proton acceptor of the active site. R229 is a binding site for NADPH. E255 serves as a coordination point for NADPH.

It belongs to the NAD-dependent glycerol-3-phosphate dehydrogenase family.

It localises to the cytoplasm. The enzyme catalyses sn-glycerol 3-phosphate + NAD(+) = dihydroxyacetone phosphate + NADH + H(+). It catalyses the reaction sn-glycerol 3-phosphate + NADP(+) = dihydroxyacetone phosphate + NADPH + H(+). The protein operates within membrane lipid metabolism; glycerophospholipid metabolism. In terms of biological role, catalyzes the reduction of the glycolytic intermediate dihydroxyacetone phosphate (DHAP) to sn-glycerol 3-phosphate (G3P), the key precursor for phospholipid synthesis. The sequence is that of Glycerol-3-phosphate dehydrogenase [NAD(P)+] from Trichormus variabilis (strain ATCC 29413 / PCC 7937) (Anabaena variabilis).